The chain runs to 1172 residues: DNA-directed RNA polymerase subunit beta (1172 aa).

The protein belongs to the RNA polymerase beta chain family. The RNAP catalytic core consists of 2 alpha, 1 beta, 1 beta' and 1 omega subunit. When a sigma factor is associated with the core the holoenzyme is formed, which can initiate transcription.

The catalysed reaction is RNA(n) + a ribonucleoside 5'-triphosphate = RNA(n+1) + diphosphate. Its function is as follows. DNA-dependent RNA polymerase catalyzes the transcription of DNA into RNA using the four ribonucleoside triphosphates as substrates. In Pseudothermotoga lettingae (strain ATCC BAA-301 / DSM 14385 / NBRC 107922 / TMO) (Thermotoga lettingae), this protein is DNA-directed RNA polymerase subunit beta.